The sequence spans 492 residues: NADH-quinone oxidoreductase subunit N (492 aa).

14 consecutive transmembrane segments (helical) span residues 5–25, 37–57, 72–92, 104–124, 129–149, 164–184, 205–225, 239–259, 276–295, 302–322, 337–357, 380–400, 414–434, and 466–486; these read PMTA…AWLI, TYFI…IDAL, VVDP…AVSI, LYEG…LVMI, FLTL…AIAL, YVLG…LYGA, VVLL…MGAV, PTAM…AWGL, MLVI…GIVQ, LAYS…AGVV, MFYS…VMLL, FAFV…AVGF, GLTW…FYYL, and VAVL…LNAI.

Belongs to the complex I subunit 2 family. NDH-1 is composed of 14 different subunits. Subunits NuoA, H, J, K, L, M, N constitute the membrane sector of the complex.

It is found in the cell inner membrane. It catalyses the reaction a quinone + NADH + 5 H(+)(in) = a quinol + NAD(+) + 4 H(+)(out). NDH-1 shuttles electrons from NADH, via FMN and iron-sulfur (Fe-S) centers, to quinones in the respiratory chain. The immediate electron acceptor for the enzyme in this species is believed to be ubiquinone. Couples the redox reaction to proton translocation (for every two electrons transferred, four hydrogen ions are translocated across the cytoplasmic membrane), and thus conserves the redox energy in a proton gradient. The chain is NADH-quinone oxidoreductase subunit N from Paraburkholderia phymatum (strain DSM 17167 / CIP 108236 / LMG 21445 / STM815) (Burkholderia phymatum).